The chain runs to 877 residues: MDDDDSGIQEEPAPPPPPPPPPPPPPPLRRLLTATRSGGSRWVDGSEVGSSESAPWSLDGDRSLRLSVDSAASAGGASGGGGGGGPLSRASSGAFRRRFGKQPRRVDSLDVEAMSVRGAHGHSSKEISMLSTVAMAFQTLGVVYGDMGTSPLYVFSDVFSKVPIKSEVEILGALSLVMYTIALIPFAKYVFIVLKANDNGEGGTFALYSLICRYAKVSLLPNQQRVDEDISSFRLKLPTPELERALSVKESLEKNPVFKNILLFLVLMGTSMVIGDGILTPSMSVMSAVSGLQGRVPGFGTDAVVIVSILFLVLLFSVQRFGTGKVGFMFAPILALWFINLGTIGIYNLAKYDISVVRAFNPVYIYLFFQTNGIKAWSALGGCVLCITGAEAMFADLGHFSVKSIQVAFTAVVFPCLLIAYMGQAAYLMKYPFAVERIFYDSVPEILFWPVFVIATLAAMIASQAMISATFSCIKQAMALGCFPRIKIIHTSKKVMGQIYIPVMNWFLMVMCIIIVATFRSTNDIANAYGIAEVGVMMVSTALVTLVMLLIWQTNLFLVMCFPVIFGSVEFVYLTAVLSKIQEGGWLPLAFSSLFLCIMYTWNYGSVLKYQSEMRGKISLDFILDLGSTLGTVRVPGIGLVYNELVQGIPSIFGHLLVTLPAMHSTIVFVCIKYVPVPYVPFEERFLFRRIGQKDYHMFRCVARYGYKDVRKEEHGFFEQLLVETLEKFLRKESQEMALEASAMAVERDDVSVVSDIPSSPVEAGDLHVPLLSDQRLGDGTQTFITEGNTPVLPTSSISEEDPSLEYELESLREAIASGFTYLLAHGDVRARKESFFTKKFIINYFYAFLRRNCRAGTATLKVPHSNIMRVGMTYMV.

2 disordered regions span residues 1 to 60 (MDDD…SLDG) and 72 to 92 (ASAG…RASS). The Cytoplasmic segment spans residues 1–126 (MDDDDSGIQE…RGAHGHSSKE (126 aa)). A compositionally biased stretch (pro residues) spans 12–28 (PAPPPPPPPPPPPPPPL). The segment covering 76–86 (GASGGGGGGGP) has biased composition (gly residues). The helical transmembrane segment at 127-147 (ISMLSTVAMAFQTLGVVYGDM) threads the bilayer. The Extracellular segment spans residues 148–173 (GTSPLYVFSDVFSKVPIKSEVEILGA). Residues 174–194 (LSLVMYTIALIPFAKYVFIVL) form a helical membrane-spanning segment. Residues 195–260 (KANDNGEGGT…SLEKNPVFKN (66 aa)) lie on the Cytoplasmic side of the membrane. A helical membrane pass occupies residues 261 to 281 (ILLFLVLMGTSMVIGDGILTP). At 282–295 (SMSVMSAVSGLQGR) the chain is on the extracellular side. The helical transmembrane segment at 296–316 (VPGFGTDAVVIVSILFLVLLF) threads the bilayer. Topologically, residues 317 to 325 (SVQRFGTGK) are cytoplasmic. Residues 326–346 (VGFMFAPILALWFINLGTIGI) form a helical membrane-spanning segment. Residues 347-379 (YNLAKYDISVVRAFNPVYIYLFFQTNGIKAWSA) lie on the Extracellular side of the membrane. Residues 380-400 (LGGCVLCITGAEAMFADLGHF) form a helical membrane-spanning segment. At 401 to 406 (SVKSIQ) the chain is on the cytoplasmic side. Residues 407–427 (VAFTAVVFPCLLIAYMGQAAY) traverse the membrane as a helical segment. The Extracellular segment spans residues 428-441 (LMKYPFAVERIFYD). A helical membrane pass occupies residues 442-462 (SVPEILFWPVFVIATLAAMIA). Topologically, residues 463-498 (SQAMISATFSCIKQAMALGCFPRIKIIHTSKKVMGQ) are cytoplasmic. A helical transmembrane segment spans residues 499 to 519 (IYIPVMNWFLMVMCIIIVATF). Topologically, residues 520–524 (RSTND) are extracellular. A helical transmembrane segment spans residues 525–545 (IANAYGIAEVGVMMVSTALVT). The Cytoplasmic segment spans residues 546–555 (LVMLLIWQTN). Residues 556–578 (LFLVMCFPVIFGSVEFVYLTAVL) form a helical membrane-spanning segment. The Extracellular segment spans residues 579–583 (SKIQE). Residues 584 to 604 (GGWLPLAFSSLFLCIMYTWNY) traverse the membrane as a helical segment. Residues 605-877 (GSVLKYQSEM…IMRVGMTYMV (273 aa)) lie on the Cytoplasmic side of the membrane.

This sequence belongs to the HAK/KUP transporter (TC 2.A.72.3) family.

It localises to the membrane. High-affinity potassium transporter. In Oryza sativa subsp. japonica (Rice), this protein is Potassium transporter 23 (HAK23).